A 1143-amino-acid polypeptide reads, in one-letter code: Probable ATP-dependent RNA helicase DHX34 (1143 aa).

2 disordered regions span residues 1 to 24 (MPPPRTREGRDRRDHHRAPSEEEA) and 75 to 94 (TSRKEEKDPGQPKHSIPALA). Residues 76 to 85 (SRKEEKDPGQ) show a composition bias toward basic and acidic residues. The Helicase ATP-binding domain occupies 172-332 (LQTLKEHQVV…FSNAPVVQVP (161 aa)). 185-192 (GDTGCGKS) provides a ligand contact to ATP. The DEAH box motif lies at 279–282 (DEVH). The Helicase C-terminal domain maps to 368-536 (SIDHKYPPEE…SLVLQMKSMS (169 aa)). The tract at residues 701-955 (QAAQVGDSYS…LRARWESALD (255 aa)) is negatively regulates interaction with UPF1. A disordered region spans residues 724 to 766 (LKRQHEEGAGRRRKVLRLQEEQDGGSSDEDRAGPAPPGASDGV). A phosphoserine mark is found at S749 and S750. The interval 810–1143 (PQLAVPDAFN…EVLRHRKQHV (334 aa)) is required for phosphorylation of UPF1. Not required for interaction with UPF1. Residues 957–1143 (QLAHQAQQQL…EVLRHRKQHV (187 aa)) form a required for the interaction with SMG1 and subsequent phosphorylation of UPF1 region.

It belongs to the DEAD box helicase family. DEAH subfamily. In terms of assembly, forms a complex with RUVBL1 and RUVBL2. Part of a complex composed of SMG1, DHX34 and UPF1; within the complex DHX34 acts as a scaffolding protein to facilitate SMG1 phosphorylation of UPF1. Interacts with UPF1, MOV10, EIF4A3, XRN2, SMG6, SMG7, SMG9, UPF3A, UPF3B, CASC3/MLN51, XRN1, DIS3 and DCP1A; the interactions are RNA-independent. Interacts with NCBP1/CPB80; the interaction is RNA-dependent. Interacts (via C-terminus) with SMG1; the interaction is RNA-independent. Expressed in whole blood, testis and spleen. Also expressed in the brain.

It catalyses the reaction ATP + H2O = ADP + phosphate + H(+). Probable ATP-binding RNA helicase required for nonsense-mediated decay (NMD) degradation of mRNA transcripts containing premature stop codons. Promotes the phosphorylation of UPF1 along with its interaction with key NMD pathway proteins UPF2 and EIF4A3. Interaction with the RUVBL1-RUVBL2 complex results in loss of nucleotide binding ability and ATP hydrolysis of the complex. Negatively regulates the nucleotide binding ability and ATP hydrolysis of the RUVBL1-RUVBL2 complex via induction of N-terminus conformation changes of the RUVBL2 subunits. The sequence is that of Probable ATP-dependent RNA helicase DHX34 from Homo sapiens (Human).